Consider the following 122-residue polypeptide: Serum amyloid A-1 protein (122 aa).

Positions 1–19 (MKLLTSLVFCSLLLGVCHG) are cleaved as a signal peptide. The segment at 20-45 (GFFSFVHEAFQGAGDMWRAYTDMKEA) is important for amyloid formation. The span at 91–108 (HEDTIADQEANRHGRSGK) shows a compositional bias: basic and acidic residues. Residues 91–122 (HEDTIADQEANRHGRSGKDPNYYRPPGLPDKY) form a disordered region.

It belongs to the SAA family. Homohexamer; dimer of trimers. Can form amyloid fibrils after partial proteolysis; the native, undenatured protein does not form amyloid fibrils (in vitro). Apolipoprotein of the HDL complex. Binds to heparin. Detected in blood plasma (at protein level). Detected in liver.

It is found in the secreted. Major acute phase protein. The chain is Serum amyloid A-1 protein (Saa1) from Mus musculus (Mouse).